The sequence spans 274 residues: MAIHLYKTSTPSTRNGTVDSQVKSNPRNNLIYGQRRCGKGRNARGIITARHRGGGHKRLYRKIDFRRNEKDIYGRIVTIEYDPNRNAYICLIHYGDGEKRYILHPRGAIIGDTIVSGTEVPIKMGNALPLTDMPLGTAIHNIEITLGKGGQLARAAGAVPKLIAKEGKSATLKLPSGEVRLISKNCSATVGQVGNVGVNQKSLGRAGSKRWLGKRPVVRGVVMNPVNHPHGGGEGRAPIGRKKPTTPWGYPALGRRSRKRNKYSDNLILRRRSK.

2 disordered regions span residues methionine 1 to asparagine 25 and methionine 223 to lysine 274. A compositionally biased stretch (polar residues) spans lysine 7–asparagine 25.

This sequence belongs to the universal ribosomal protein uL2 family. Part of the 50S ribosomal subunit.

It localises to the plastid. The protein localises to the chloroplast. The sequence is that of Large ribosomal subunit protein uL2cy (rpl2-B) from Atropa belladonna (Belladonna).